The sequence spans 151 residues: Large ribosomal subunit protein bL9 (151 aa).

This sequence belongs to the bacterial ribosomal protein bL9 family.

Its function is as follows. Binds to the 23S rRNA. The chain is Large ribosomal subunit protein bL9 from Pelobacter propionicus (strain DSM 2379 / NBRC 103807 / OttBd1).